The primary structure comprises 1133 residues: uncharacterized protein (1133 aa).

Disordered regions lie at residues 33–83, 305–629, 679–723, and 736–817; these read QFED…NSSS, PVSN…NSNS, GKLD…SVKR, and IESP…SEEV. Residues 39–83 are compositionally biased toward low complexity; the sequence is NNNNSNNNNNNNNSNNNNSNNNENINRKTGSTLLSSSTSQLNSSS. Residues 40–308 constitute a DNA-binding region (NDT80); that stretch reads NNNSNNNNNN…GHPTCNPVSN (269 aa). Residues 305–316 are compositionally biased toward polar residues; that stretch reads PVSNNPSTPGTP. The segment covering 317–384 has biased composition (low complexity); the sequence is ISNFDSSNNN…NNNSSGNSSS (68 aa). Residues 401–417 are compositionally biased toward polar residues; that stretch reads INSLSNHNSPHLTPIQY. Low complexity predominate over residues 418 to 452; that stretch reads NNNNNNSNNNSNNNNNNNNNNNNSNNNNNNSNNNN. Polar residues predominate over residues 453–470; it reads HQFQSNNRIFKGNLSNPF. 2 stretches are compositionally biased toward low complexity: residues 473-615 and 686-714; these read NYSQ…GNNS and NNSN…NNNN. Residues 736–747 show a composition bias toward polar residues; sequence IESPQSYISSPT. The segment covering 757–771 has biased composition (pro residues); it reads QPQPQPQPQPQPQPQ. The span at 772-808 shows a compositional bias: low complexity; sequence PQSQSQSQSQSQSQSQSQSQSQSQPIQQIVQQQLSSP. The Peptidase S74 domain maps to 909 to 1020; sequence SDKRVKENVK…KKVDNVCMEL (112 aa). The chain crosses the membrane as a helical span at residues 1055–1075; it reads IFIGIGVFTLFVIFGLVAVSI. The segment at 1107 to 1133 is disordered; sequence SGSNSCYDSSSNSAIDTTTSTGSGSIK.

Its subcellular location is the membrane. This is an uncharacterized protein from Dictyostelium discoideum (Social amoeba).